Consider the following 160-residue polypeptide: Large ribosomal subunit protein eL21 (160 aa).

This sequence belongs to the eukaryotic ribosomal protein eL21 family.

The protein is Large ribosomal subunit protein eL21 (RPL21) of Encephalitozoon cuniculi (strain GB-M1) (Microsporidian parasite).